The sequence spans 83 residues: uncharacterized protein (83 aa).

A helical membrane pass occupies residues 24–44 (AMTLLIITNTLLIILSYSVLL).

Its subcellular location is the host membrane. This is an uncharacterized protein from Acidianus sp. F28 (AFV-2).